The chain runs to 440 residues: Nitrilase and fragile histidine triad fusion protein NitFhit (440 aa).

In terms of domain architecture, CN hydrolase spans 14-264 (RHFIAVCQMT…VDMCFAEIDL (251 aa)). Active-site residues include E54, K127, and C169. Positions 297–405 (GGLKFARFNI…LPRRAGDFGD (109 aa)) constitute an HIT domain. Positions 390–394 (HVHIH) match the Histidine triad motif motif. H392 (tele-AMP-histidine intermediate) is an active-site residue.

This sequence in the N-terminal section; belongs to the UPF0012 family. Homotetramer. Requires Mn(2+) as cofactor.

It catalyses the reaction P(1),P(3)-bis(5'-adenosyl) triphosphate + H2O = AMP + ADP + 2 H(+). Functionally, cleaves A-5'-PPP-5'A to yield AMP and ADP. This Caenorhabditis elegans protein is Nitrilase and fragile histidine triad fusion protein NitFhit.